A 420-amino-acid chain; its full sequence is Protein BDLF2 (420 aa).

2 disordered regions span residues 1–21 and 64–129; these read MVDE…SREE and AAAV…GGQR. Residues 1–184 are Intravirion-facing; sequence MVDEQVAVEH…AETLAEPPRC (184 aa). Positions 92 to 108 are enriched in low complexity; it reads TNTQDQNQNQTTRARTN. Residues 185 to 205 form a helical; Signal-anchor for type II membrane protein membrane-spanning segment; the sequence is FMLSFVFIYYCCYLAFLALLA. The Virion surface portion of the chain corresponds to 206 to 420; it reads FGFNPLFLPS…LEEVMYVMVQ (215 aa). N-linked (GlcNAc...) asparagine; by host glycosylation is found at Asn258, Asn264, Asn300, Asn304, Asn371, and Asn384.

This sequence belongs to the herpesviridae BDLF2 family. In terms of assembly, interacts with BMRF2.

It localises to the virion membrane. In terms of biological role, rearranges cellular actin to increase intercellular contacts and thereby promote virus cell-to-cell spreading. Induce the outgrowth of long, branched plasma membrane fronds to create intercellular network for virion traffic. The fronds are actin based and RhoA-dependent. This chain is Protein BDLF2, found in Epstein-Barr virus (strain GD1) (HHV-4).